Reading from the N-terminus, the 510-residue chain is Bifunctional purine biosynthesis protein PurH (510 aa).

Residues 1–142 (MRALLSVSDK…KNYKDVMVLC (142 aa)) enclose the MGS-like domain.

Belongs to the PurH family.

It carries out the reaction (6R)-10-formyltetrahydrofolate + 5-amino-1-(5-phospho-beta-D-ribosyl)imidazole-4-carboxamide = 5-formamido-1-(5-phospho-D-ribosyl)imidazole-4-carboxamide + (6S)-5,6,7,8-tetrahydrofolate. It catalyses the reaction IMP + H2O = 5-formamido-1-(5-phospho-D-ribosyl)imidazole-4-carboxamide. The protein operates within purine metabolism; IMP biosynthesis via de novo pathway; 5-formamido-1-(5-phospho-D-ribosyl)imidazole-4-carboxamide from 5-amino-1-(5-phospho-D-ribosyl)imidazole-4-carboxamide (10-formyl THF route): step 1/1. Its pathway is purine metabolism; IMP biosynthesis via de novo pathway; IMP from 5-formamido-1-(5-phospho-D-ribosyl)imidazole-4-carboxamide: step 1/1. The sequence is that of Bifunctional purine biosynthesis protein PurH from Campylobacter jejuni subsp. jejuni serotype O:2 (strain ATCC 700819 / NCTC 11168).